The following is a 388-amino-acid chain: Protein phosphatase 2C 57 (388 aa).

The 290-residue stretch at arginine 59–leucine 348 folds into the PPM-type phosphatase domain. Mn(2+) contacts are provided by aspartate 93, glycine 94, aspartate 296, and aspartate 339. The helical transmembrane segment at valine 363 to methionine 383 threads the bilayer.

It belongs to the PP2C family. Mg(2+) is required as a cofactor. It depends on Mn(2+) as a cofactor.

It localises to the membrane. It is found in the plastid. The protein localises to the chloroplast stroma. It catalyses the reaction O-phospho-L-seryl-[protein] + H2O = L-seryl-[protein] + phosphate. It carries out the reaction O-phospho-L-threonyl-[protein] + H2O = L-threonyl-[protein] + phosphate. In terms of biological role, protein phosphatase specifically required for efficient dephosphorylation of the light-harvesting complex II outer antennae (LCHII) and transition from state 2 to state 1. State transition plays a central role in response to environmental changes and allows to adjust to changing light conditions via the redistribution of light excitation energy between photosystem II (PSII) and photosystem I (PSI) in a short time by relocating LHCII proteins. Mainly responsible for the dephosphorylation of Lhcb1 and Lhcb2 but not of the photosystem II core proteins. This Arabidopsis thaliana (Mouse-ear cress) protein is Protein phosphatase 2C 57.